We begin with the raw amino-acid sequence, 189 residues long: Threonylcarbamoyl-AMP synthase (189 aa).

The region spanning 3-189 is the YrdC-like domain; the sequence is TTSVTEAAEC…NALTGEVIRP (187 aa).

This sequence belongs to the SUA5 family. TsaC subfamily.

It is found in the cytoplasm. It carries out the reaction L-threonine + hydrogencarbonate + ATP = L-threonylcarbamoyladenylate + diphosphate + H2O. Its function is as follows. Required for the formation of a threonylcarbamoyl group on adenosine at position 37 (t(6)A37) in tRNAs that read codons beginning with adenine. Catalyzes the conversion of L-threonine, HCO(3)(-)/CO(2) and ATP to give threonylcarbamoyl-AMP (TC-AMP) as the acyladenylate intermediate, with the release of diphosphate. This chain is Threonylcarbamoyl-AMP synthase, found in Acinetobacter baumannii (strain ACICU).